The chain runs to 414 residues: MIAEIVAIGSELLTPFRQDTNSLYLTQRLNEMGVEVAFKNIVGDSRANLASVARTAIARSHIVLFMGGLGPTEDDLTREAVADALGLRLKRNPDLVAELYKRFASRRVTMPDNNMRQADVIAGAEIIQNDNGSAPGQFIEGEQDGQPRYIFLLPGPPHELKAMWNEKCHHTLRDRLPRAYIATRELRISSLGESTVDARVAPIYTKYKNVDTTILAKPGEVSLHLKSRAATMEQAQAAVDQLAAELEDELDDAVFSTNGESLEQIVGYYLQMRSGTISVAESCTGGLLAERLTNVSGSSRYFIGGVVVYSNQMKTLLADVPPLMIEEHGAVSRQVAVALAENFREITNSTIGVGITGIAGPTGGTEDKPVGLVYIAVADELGTDVVERRFPGDRERIRWWSSQVALDMVRKKLI.

It belongs to the CinA family.

The sequence is that of CinA-like protein from Koribacter versatilis (strain Ellin345).